A 352-amino-acid chain; its full sequence is Thrombopoietin (352 aa).

The N-terminal stretch at 1 to 23 (MELTELLLVVMLLLTARLDPCLP) is a signal peptide. Cystine bridges form between cysteine 28/cysteine 172 and cysteine 50/cysteine 106. N-linked (GlcNAc...) asparagine glycans are attached at residues asparagine 185, asparagine 197, asparagine 206, asparagine 234, and asparagine 255. The span at 233 to 245 (LNQTSRSLNQTPG) shows a compositional bias: polar residues. 2 disordered regions span residues 233-259 (LNQT…GTHG) and 292-352 (YSPS…SQEE). The span at 311–327 (PTSPTPQNPLQPPPPDP) shows a compositional bias: pro residues. N-linked (GlcNAc...) asparagine glycans are attached at residues asparagine 332 and asparagine 347.

The protein belongs to the EPO/TPO family.

The protein resides in the secreted. In terms of biological role, lineage-specific cytokine affecting the proliferation and maturation of megakaryocytes from their committed progenitor cells. It acts at a late stage of megakaryocyte development. It may be the major physiological regulator of circulating platelets. The polypeptide is Thrombopoietin (THPO) (Canis lupus familiaris (Dog)).